A 122-amino-acid chain; its full sequence is Ribonuclease pancreatic (122 aa).

Positions 1-16 (ETPAEKFQRQHMDTEH) are enriched in basic and acidic residues. Residues 1 to 20 (ETPAEKFQRQHMDTEHSTAS) are disordered. Substrate contacts are provided by Lys-6 and Arg-9. His-11 serves as the catalytic Proton acceptor. Cystine bridges form between Cys-25/Cys-83, Cys-39/Cys-94, Cys-57/Cys-109, and Cys-64/Cys-71. Substrate-binding positions include 40–44 (KPLNT), Lys-65, and Arg-84. His-117 acts as the Proton donor in catalysis.

The protein belongs to the pancreatic ribonuclease family. As to quaternary structure, monomer. Interacts with and forms tight 1:1 complexes with RNH1. Dimerization of two such complexes may occur. Interaction with RNH1 inhibits this protein. Post-translationally, not glycosylated although the sequence N-V-T, a recognition site for carbohydrate attachment, is present. Pancreas.

It localises to the secreted. The enzyme catalyses an [RNA] containing cytidine + H2O = an [RNA]-3'-cytidine-3'-phosphate + a 5'-hydroxy-ribonucleotide-3'-[RNA].. It carries out the reaction an [RNA] containing uridine + H2O = an [RNA]-3'-uridine-3'-phosphate + a 5'-hydroxy-ribonucleotide-3'-[RNA].. Endonuclease that catalyzes the cleavage of RNA on the 3' side of pyrimidine nucleotides. Acts on single-stranded and double-stranded RNA. The polypeptide is Ribonuclease pancreatic (RNASE1) (Osphranter rufus (Red kangaroo)).